Here is a 360-residue protein sequence, read N- to C-terminus: Protein Wnt-2 (360 aa).

A signal peptide spans 1–25 (MNACLVGIWLWLPLLFTWLSPEVSS). Intrachain disulfides connect C76/C87, C127/C135, C137/C157, C206/C220, C208/C215, C278/C309, C294/C304, C308/C348, C324/C339, C326/C336, and C331/C332. S212 carries O-palmitoleoyl serine; by PORCN lipidation. The N-linked (GlcNAc...) asparagine glycan is linked to N295.

The protein belongs to the Wnt family. In terms of processing, palmitoleoylation is required for efficient binding to frizzled receptors. Depalmitoleoylation leads to Wnt signaling pathway inhibition.

Its subcellular location is the secreted. It localises to the extracellular space. It is found in the extracellular matrix. In terms of biological role, ligand for members of the frizzled family of seven transmembrane receptors. Probable developmental protein. May be a signaling molecule which affects the development of discrete regions of tissues. Is likely to signal over only few cell diameters. The chain is Protein Wnt-2 (WNT2) from Muntiacus muntjak (Barking deer).